Reading from the N-terminus, the 295-residue chain is Nucleotide-binding protein RD1_1380 (295 aa).

An ATP-binding site is contributed by 16-23 (GPSGAGRS). GTP is bound at residue 63-66 (DPRN).

This sequence belongs to the RapZ-like family.

Functionally, displays ATPase and GTPase activities. In Roseobacter denitrificans (strain ATCC 33942 / OCh 114) (Erythrobacter sp. (strain OCh 114)), this protein is Nucleotide-binding protein RD1_1380.